The chain runs to 105 residues: Small ribosomal subunit protein eS10B (105 aa).

It belongs to the eukaryotic ribosomal protein eS10 family. Component of the small ribosomal subunit (SSU). Mature yeast ribosomes consist of a small (40S) and a large (60S) subunit. The 40S small subunit contains 1 molecule of ribosomal RNA (18S rRNA) and 33 different proteins (encoded by 57 genes). The large 60S subunit contains 3 rRNA molecules (25S, 5.8S and 5S rRNA) and 46 different proteins (encoded by 81 genes). eS10 interacts with GCN1 (via middle region); this interaction is direct and promotes GCN2 kinase activity. In terms of processing, the N-terminus is not modified.

It localises to the cytoplasm. Functionally, component of the ribosome, a large ribonucleoprotein complex responsible for the synthesis of proteins in the cell. The small ribosomal subunit (SSU) binds messenger RNAs (mRNAs) and translates the encoded message by selecting cognate aminoacyl-transfer RNA (tRNA) molecules. The large subunit (LSU) contains the ribosomal catalytic site termed the peptidyl transferase center (PTC), which catalyzes the formation of peptide bonds, thereby polymerizing the amino acids delivered by tRNAs into a polypeptide chain. The nascent polypeptides leave the ribosome through a tunnel in the LSU and interact with protein factors that function in enzymatic processing, targeting, and the membrane insertion of nascent chains at the exit of the ribosomal tunnel. eS10 plays a role as a positive regulator of the GCN2 kinase activity by stimulating GCN1-mediated GCN2 activation. In Saccharomyces cerevisiae (strain ATCC 204508 / S288c) (Baker's yeast), this protein is Small ribosomal subunit protein eS10B.